A 582-amino-acid chain; its full sequence is Hemagglutinin-neuraminidase (582 aa).

A helical membrane pass occupies residues Ile35 to Leu55. Intrachain disulfides connect Cys178–Cys202, Cys192–Cys253, and Cys244–Cys257. 2 N-linked (GlcNAc...) asparagine; by host glycosylation sites follow: Asn284 and Asn329. 3 disulfides stabilise this stretch: Cys350-Cys471, Cys382-Cys392, and Cys465-Cys475. Residues Asn400 and Asn448 are each glycosylated (N-linked (GlcNAc...) asparagine; by host). N-linked (GlcNAc...) asparagine; by host glycosylation is present at Asn507. Cysteines 545 and 556 form a disulfide.

This sequence belongs to the paramyxoviruses hemagglutinin-neuraminidase family. In terms of assembly, homodimer. Further forms homotetramer (dimer of dimers). Interacts with F protein trimer.

It is found in the virion membrane. Its subcellular location is the host cell membrane. The enzyme catalyses Hydrolysis of alpha-(2-&gt;3)-, alpha-(2-&gt;6)-, alpha-(2-&gt;8)- glycosidic linkages of terminal sialic acid residues in oligosaccharides, glycoproteins, glycolipids, colominic acid and synthetic substrates.. Attaches the virus to alpha-2,3-linked sialic acid-containing cell receptors and thereby initiating infection. Binding of HN protein to the receptor induces a conformational change that allows the F protein to trigger virion/cell membranes fusion. Binds to the glycan motifs sialyl Lewis (SLe) and GM2 ganglioside (GM2-glycan). Functionally, neuraminidase activity ensures the efficient spread of the virus by dissociating the mature virions from the neuraminic acid containing glycoproteins. In Homo sapiens (Human), this protein is Hemagglutinin-neuraminidase (HN).